We begin with the raw amino-acid sequence, 428 residues long: 3-phosphoshikimate 1-carboxyvinyltransferase (428 aa).

Lysine 22, serine 23, and arginine 27 together coordinate 3-phosphoshikimate. Position 22 (lysine 22) interacts with phosphoenolpyruvate. Phosphoenolpyruvate is bound by residues glycine 96 and arginine 124. 3-phosphoshikimate-binding residues include serine 169, serine 170, glutamine 171, serine 197, aspartate 313, asparagine 336, and lysine 340. Glutamine 171 contributes to the phosphoenolpyruvate binding site. Aspartate 313 acts as the Proton acceptor in catalysis. Residues arginine 344, arginine 386, and lysine 411 each coordinate phosphoenolpyruvate.

Belongs to the EPSP synthase family. As to quaternary structure, monomer.

The protein localises to the cytoplasm. It carries out the reaction 3-phosphoshikimate + phosphoenolpyruvate = 5-O-(1-carboxyvinyl)-3-phosphoshikimate + phosphate. It functions in the pathway metabolic intermediate biosynthesis; chorismate biosynthesis; chorismate from D-erythrose 4-phosphate and phosphoenolpyruvate: step 6/7. Functionally, catalyzes the transfer of the enolpyruvyl moiety of phosphoenolpyruvate (PEP) to the 5-hydroxyl of shikimate-3-phosphate (S3P) to produce enolpyruvyl shikimate-3-phosphate and inorganic phosphate. In Proteus mirabilis (strain HI4320), this protein is 3-phosphoshikimate 1-carboxyvinyltransferase.